Here is a 496-residue protein sequence, read N- to C-terminus: Probable cytosol aminopeptidase (496 aa).

Positions 258 and 263 each coordinate Mn(2+). Lysine 270 is an active-site residue. 3 residues coordinate Mn(2+): aspartate 281, aspartate 340, and glutamate 342. Arginine 344 is an active-site residue.

This sequence belongs to the peptidase M17 family. Mn(2+) is required as a cofactor.

It localises to the cytoplasm. It carries out the reaction Release of an N-terminal amino acid, Xaa-|-Yaa-, in which Xaa is preferably Leu, but may be other amino acids including Pro although not Arg or Lys, and Yaa may be Pro. Amino acid amides and methyl esters are also readily hydrolyzed, but rates on arylamides are exceedingly low.. The catalysed reaction is Release of an N-terminal amino acid, preferentially leucine, but not glutamic or aspartic acids.. Functionally, presumably involved in the processing and regular turnover of intracellular proteins. Catalyzes the removal of unsubstituted N-terminal amino acids from various peptides. The chain is Probable cytosol aminopeptidase from Helicobacter pylori (strain P12).